A 58-amino-acid chain; its full sequence is MSEVRVGENESLDSALRRFKKKCAEAGVLAELRKREHYESPSVRRKKKSEAARRRKRR.

Positions 34-58 are disordered; the sequence is KREHYESPSVRRKKKSEAARRRKRR. Residues 43 to 58 show a composition bias toward basic residues; that stretch reads VRRKKKSEAARRRKRR.

The protein belongs to the bacterial ribosomal protein bS21 family.

This chain is Small ribosomal subunit protein bS21, found in Caldicellulosiruptor bescii (strain ATCC BAA-1888 / DSM 6725 / KCTC 15123 / Z-1320) (Anaerocellum thermophilum).